The following is a 118-amino-acid chain: Small ribosomal subunit protein uS13 (118 aa).

Residues 94 to 118 form a disordered region; that stretch reads GLPVRGQRTKTNARTRKGPRKPIKK.

This sequence belongs to the universal ribosomal protein uS13 family. As to quaternary structure, part of the 30S ribosomal subunit. Forms a loose heterodimer with protein S19. Forms two bridges to the 50S subunit in the 70S ribosome.

Its function is as follows. Located at the top of the head of the 30S subunit, it contacts several helices of the 16S rRNA. In the 70S ribosome it contacts the 23S rRNA (bridge B1a) and protein L5 of the 50S subunit (bridge B1b), connecting the 2 subunits; these bridges are implicated in subunit movement. Contacts the tRNAs in the A and P-sites. This Klebsiella pneumoniae (strain 342) protein is Small ribosomal subunit protein uS13.